Here is a 95-residue protein sequence, read N- to C-terminus: Aspartyl/glutamyl-tRNA(Asn/Gln) amidotransferase subunit C (95 aa).

It belongs to the GatC family. As to quaternary structure, heterotrimer of A, B and C subunits.

The catalysed reaction is L-glutamyl-tRNA(Gln) + L-glutamine + ATP + H2O = L-glutaminyl-tRNA(Gln) + L-glutamate + ADP + phosphate + H(+). It catalyses the reaction L-aspartyl-tRNA(Asn) + L-glutamine + ATP + H2O = L-asparaginyl-tRNA(Asn) + L-glutamate + ADP + phosphate + 2 H(+). Functionally, allows the formation of correctly charged Asn-tRNA(Asn) or Gln-tRNA(Gln) through the transamidation of misacylated Asp-tRNA(Asn) or Glu-tRNA(Gln) in organisms which lack either or both of asparaginyl-tRNA or glutaminyl-tRNA synthetases. The reaction takes place in the presence of glutamine and ATP through an activated phospho-Asp-tRNA(Asn) or phospho-Glu-tRNA(Gln). The protein is Aspartyl/glutamyl-tRNA(Asn/Gln) amidotransferase subunit C of Ruegeria pomeroyi (strain ATCC 700808 / DSM 15171 / DSS-3) (Silicibacter pomeroyi).